The sequence spans 314 residues: Methionyl-tRNA formyltransferase (314 aa).

110 to 113 (SLLP) contributes to the (6S)-5,6,7,8-tetrahydrofolate binding site.

Belongs to the Fmt family.

It catalyses the reaction L-methionyl-tRNA(fMet) + (6R)-10-formyltetrahydrofolate = N-formyl-L-methionyl-tRNA(fMet) + (6S)-5,6,7,8-tetrahydrofolate + H(+). Attaches a formyl group to the free amino group of methionyl-tRNA(fMet). The formyl group appears to play a dual role in the initiator identity of N-formylmethionyl-tRNA by promoting its recognition by IF2 and preventing the misappropriation of this tRNA by the elongation apparatus. The protein is Methionyl-tRNA formyltransferase of Levilactobacillus brevis (strain ATCC 367 / BCRC 12310 / CIP 105137 / JCM 1170 / LMG 11437 / NCIMB 947 / NCTC 947) (Lactobacillus brevis).